Consider the following 193-residue polypeptide: Signal peptidase complex catalytic subunit SEC11 (193 aa).

The Cytoplasmic segment spans residues 1-16 (MFSEELKAFRRLGIRH). The chain crosses the membrane as a helical; Signal-anchor for type II membrane protein span at residues 17–41 (LLLQALNFASVIASGLMMWKGLGVI). Topologically, residues 42–193 (TNTESPIVVV…LGLMALIQRE (152 aa)) are lumenal. Active-site charge relay system residues include Ser55 and His95. N-linked (GlcNAc...) asparagine glycosylation occurs at Asn106. Asp136 serves as the catalytic Charge relay system. The C-terminal short (CTS) helix stretch occupies residues 179–190 (GLLGILGLMALI).

The protein belongs to the peptidase S26B family. In terms of assembly, component of the signal peptidase complex (SPC) composed of a catalytic subunit SEC11 and three accessory subunits SPC1, SPC2 and SPC3. The complex induces a local thinning of the ER membrane which is used to measure the length of the signal peptide (SP) h-region of protein substrates. This ensures the selectivity of the complex towards h-regions shorter than 18-20 amino acids. SPC associates with the translocon complex.

The protein localises to the endoplasmic reticulum membrane. It carries out the reaction Cleavage of hydrophobic, N-terminal signal or leader sequences from secreted and periplasmic proteins.. Functionally, catalytic component of the signal peptidase complex (SPC) which catalyzes the cleavage of N-terminal signal sequences from nascent proteins as they are translocated into the lumen of the endoplasmic reticulum. Specifically cleaves N-terminal signal peptides that contain a hydrophobic alpha-helix (h-region) shorter than 18-20 amino acids. The chain is Signal peptidase complex catalytic subunit SEC11 (SEC11) from Schizophyllum commune (strain H4-8 / FGSC 9210) (Split gill fungus).